A 265-amino-acid polypeptide reads, in one-letter code: Novel plant SNARE 12 (265 aa).

Over 1–217 the chain is Cytoplasmic; that stretch reads MASELPMSPH…IGRQVATDKC (217 aa). Residues 32–106 adopt a coiled-coil conformation; it reads LDKIKDSSRQ…ALRKTYLNTL (75 aa). Position 74 is a phosphoserine (S74). One can recognise a t-SNARE coiled-coil homology domain in the interval 146–208; the sequence is MKRMDETDQA…KKASQLVKEI (63 aa). The chain crosses the membrane as a helical; Anchor for type IV membrane protein span at residues 218-238; the sequence is IMAFLFLIVCGVIAIIIVKIV. Topologically, residues 239 to 265 are vesicular; it reads NPNNKDIRDIPGLAPPAQSRKLLYFRE.

The protein belongs to the novel plant SNARE family. In terms of tissue distribution, expressed in roots, stems, flower, siliques and leaves.

It is found in the membrane. Its function is as follows. Vesicle trafficking protein that functions in the secretory pathway. In Arabidopsis thaliana (Mouse-ear cress), this protein is Novel plant SNARE 12 (NPSN12).